Here is a 421-residue protein sequence, read N- to C-terminus: Gamma-glutamyl phosphate reductase (421 aa).

It belongs to the gamma-glutamyl phosphate reductase family.

Its subcellular location is the cytoplasm. It catalyses the reaction L-glutamate 5-semialdehyde + phosphate + NADP(+) = L-glutamyl 5-phosphate + NADPH + H(+). It functions in the pathway amino-acid biosynthesis; L-proline biosynthesis; L-glutamate 5-semialdehyde from L-glutamate: step 2/2. In terms of biological role, catalyzes the NADPH-dependent reduction of L-glutamate 5-phosphate into L-glutamate 5-semialdehyde and phosphate. The product spontaneously undergoes cyclization to form 1-pyrroline-5-carboxylate. This chain is Gamma-glutamyl phosphate reductase, found in Herminiimonas arsenicoxydans.